The following is a 504-amino-acid chain: Pre-mRNA-processing factor 19 (504 aa).

Residue Ser2 is modified to N-acetylserine. Residues 2 to 73 enclose the U-box domain; the sequence is SLICSISNEV…KPPSATSIPA (72 aa). Positions 68–223 are may mediate interaction with PSMC5; it reads ATSIPAILKA…VGLHSASIPG (156 aa). N6-acetyllysine is present on residues Lys122, Lys179, Lys244, and Lys261. Residues 219 to 259 form a WD 1 repeat; that stretch reads ASIPGILALDLCPSDTNKILTGGADKNVVVFDKSTEQILAT. WD repeat units follow at residues 262-301, 304-345, 348-387, 390-429, 433-472, and 473-503; these read GHTKKVTSVVFHPSQELVFSASPDATIRIWSVPNTSCVQV, AHES…TKVT, TSGCSLTCAQFHPDGLIFGTGTMDSQIKIWDLKERTNVAN, GHSGPITSIAFSENGYYLATAADDSSVKLWDLRKLKNFKT, DNNFEVKSLIFDQSGTYLALGGTDVQIYICKQWTEILHFT, and EHSGLTTGVAFGHHAKFIASTGMDRSLKFYS.

Belongs to the WD repeat PRP19 family. As to quaternary structure, homotetramer. Component of activated, catalytic and post-catalytic spliceosomes. Component of the Prp19 complex/PRP19C/Nineteen complex/NTC and related complexes described as PRP19-CDC5L splicing complex and PSO4 complex. A homotetramer of PRPF19, CDC5L, PLRG1 and BCAS2 constitute the core of those complexes. The interaction with CDC5L, PLRG1 and BCAS2 is direct within this core complex. At least three less stably associated proteins CTNNBL1, CWC15 and HSPA8 are found in the Prp19 complex. The Prp19 complex associates with the spliceosome during its assembly and remodeling recruiting additional proteins. Component of the XAB2 complex, a multimeric protein complex composed of XAB2, PRPF19, AQR, ZNF830, ISY1, and PPIE. Interacts with CWC22 and EIF4A3 in an RNA-independent manner. Interacts with RPA1 and RPA2; the PRP19-CDC5L complex is recruited to the sites of DNA repair where it interacts with the replication protein A complex (RPA). Interacts with SETMAR; required for SETMAR recruitment to site of DNA damage. Interacts with U2AF2; the interaction is direct and recruits the Prp19 complex to RNA polymerase II C-terminal domain (CTD) and the pre-mRNA. Interacts with PRPF3. Interacts with APEX1, DNTT and PSMB4. Interacts with KNSTRN. Interacts with PSMC5. Isoform 2 (via N-terminus) interacts with PPIA. Isoform 2 does not interact with CDC5L. Interacts with KHDC4. Interacts with USB1. Interacts with DDX41. In terms of tissue distribution, expressed in white and brown adipose tissues, brain and to a lower extent in liver, kidney, muscle, lung and spleen (at protein level).

Its subcellular location is the nucleus. It localises to the nucleoplasm. It is found in the cytoplasm. The protein resides in the cytoskeleton. The protein localises to the spindle. Its subcellular location is the lipid droplet. It carries out the reaction S-ubiquitinyl-[E2 ubiquitin-conjugating enzyme]-L-cysteine + [acceptor protein]-L-lysine = [E2 ubiquitin-conjugating enzyme]-L-cysteine + N(6)-ubiquitinyl-[acceptor protein]-L-lysine.. It participates in protein modification; protein ubiquitination. Its function is as follows. Ubiquitin-protein ligase which is a core component of several complexes mainly involved in pre-mRNA splicing and DNA repair. Required for pre-mRNA splicing as component of the spliceosome. Core component of the PRP19C/Prp19 complex/NTC/Nineteen complex which is part of the spliceosome and participates in its assembly, its remodeling and is required for its activity. During assembly of the spliceosome, mediates 'Lys-63'-linked polyubiquitination of the U4 spliceosomal protein PRPF3. Ubiquitination of PRPF3 allows its recognition by the U5 component PRPF8 and stabilizes the U4/U5/U6 tri-snRNP spliceosomal complex. Recruited to RNA polymerase II C-terminal domain (CTD) and the pre-mRNA, it may also couple the transcriptional and spliceosomal machineries. The XAB2 complex, which contains PRPF19, is also involved in pre-mRNA splicing, transcription and transcription-coupled repair. Beside its role in pre-mRNA splicing PRPF19, as part of the PRP19-CDC5L complex, plays a role in the DNA damage response/DDR. It is recruited to the sites of DNA damage by the RPA complex where PRPF19 directly ubiquitinates RPA1 and RPA2. 'Lys-63'-linked polyubiquitination of the RPA complex allows the recruitment of the ATR-ATRIP complex and the activation of ATR, a master regulator of the DNA damage response. May also play a role in DNA double-strand break (DSB) repair by recruiting the repair factor SETMAR to altered DNA. As part of the PSO4 complex may also be involved in the DNA interstrand cross-links/ICLs repair process. In addition, may also mediate 'Lys-48'-linked polyubiquitination of substrates and play a role in proteasomal degradation. May play a role in the biogenesis of lipid droplets. May play a role in neural differentiation possibly through its function as part of the spliceosome. In terms of biological role, forced expression leads to suppression of neuronal differentiation, and on the contrary to stimulation of astroglial cell differentiation in retinoic acid-primed P19 cells. In Mus musculus (Mouse), this protein is Pre-mRNA-processing factor 19.